The primary structure comprises 314 residues: tRNA dimethylallyltransferase (314 aa).

Position 11 to 18 (11 to 18) interacts with ATP; the sequence is GPTASGKT. 13–18 contacts substrate; the sequence is TASGKT. 4 interaction with substrate tRNA regions span residues 36–39, 160–164, 241–246, and 274–281; these read DSAL, QRINR, RCVGYR, and KRQITWLR.

The protein belongs to the IPP transferase family. As to quaternary structure, monomer. It depends on Mg(2+) as a cofactor.

It carries out the reaction adenosine(37) in tRNA + dimethylallyl diphosphate = N(6)-dimethylallyladenosine(37) in tRNA + diphosphate. In terms of biological role, catalyzes the transfer of a dimethylallyl group onto the adenine at position 37 in tRNAs that read codons beginning with uridine, leading to the formation of N6-(dimethylallyl)adenosine (i(6)A). This chain is tRNA dimethylallyltransferase, found in Glaesserella parasuis serovar 5 (strain SH0165) (Haemophilus parasuis).